Consider the following 179-residue polypeptide: Large ribosomal subunit protein uL6 (179 aa).

It belongs to the universal ribosomal protein uL6 family. In terms of assembly, part of the 50S ribosomal subunit.

This protein binds to the 23S rRNA, and is important in its secondary structure. It is located near the subunit interface in the base of the L7/L12 stalk, and near the tRNA binding site of the peptidyltransferase center. This Chlorobium phaeovibrioides (strain DSM 265 / 1930) (Prosthecochloris vibrioformis (strain DSM 265)) protein is Large ribosomal subunit protein uL6.